A 689-amino-acid polypeptide reads, in one-letter code: Armadillo-like helical domain-containing protein 3 (689 aa).

The chain crosses the membrane as a helical span at residues 520–538 (IFQLALQVVNLFNMFITYG).

The protein belongs to the ARMH3 family.

It localises to the golgi apparatus membrane. The protein localises to the cytoplasm. In terms of biological role, may be involved in Golgi maintenance and protein secretion. The sequence is that of Armadillo-like helical domain-containing protein 3 from Danio rerio (Zebrafish).